A 455-amino-acid chain; its full sequence is MSTRRIFGLETEYGITCAAPPGQQGLSADEVARYLFRKVVAWGRSSNVFLRNGSRLYLDVGSHPEYATAECDDIRQLITYDRGGERILEGLVADAQQRLELEGVPGTIHLFKNNTDSAGNSYGCHENYLVRRQGDFTRLADILVPFLITRQVLTGAGKILTTPAGATFCLSQRADHIWESVSSATTRSRPIINTRDEPHADAELYRRLHVIVGDSSMAEPTAMLKVGATDMVLRMIEAGVPMRDMALENPMRAIREISHDMTGKAPITLASGRTVTAVDLQQEYLVKVRDFVESTGEVSDTDRKVFDLWERGLLALQSGDLTSVERELDWVIKHRLVRRYQEKHSLELSDPRIARLDLAYHDISRTEGLYNLLAARGLVERVTSDVEVLESTAVPPQTTRARLRGEFVRRAQEAKRDYTVDWVHLKLNDQAQRTVLCKDPFQSVDERVDRLIESM.

Glu-10 contributes to the Mg(2+) binding site. Arg-55 serves as a coordination point for ATP. Position 57 (Tyr-57) interacts with Mg(2+). Asp-59 acts as the Proton acceptor in catalysis. Residue Glu-65 coordinates Mg(2+). The ATP site is built by Thr-68 and Trp-422.

It belongs to the Pup ligase/Pup deamidase family. Pup-conjugating enzyme subfamily.

It catalyses the reaction ATP + [prokaryotic ubiquitin-like protein]-L-glutamate + [protein]-L-lysine = ADP + phosphate + N(6)-([prokaryotic ubiquitin-like protein]-gamma-L-glutamyl)-[protein]-L-lysine.. It participates in protein degradation; proteasomal Pup-dependent pathway. The protein operates within protein modification; protein pupylation. Its function is as follows. Catalyzes the covalent attachment of the prokaryotic ubiquitin-like protein modifier Pup to the proteasomal substrate proteins, thereby targeting them for proteasomal degradation. This tagging system is termed pupylation. The ligation reaction involves the side-chain carboxylate of the C-terminal glutamate of Pup and the side-chain amino group of a substrate lysine. The chain is Pup--protein ligase from Sanguibacter keddieii (strain ATCC 51767 / DSM 10542 / NCFB 3025 / ST-74).